The primary structure comprises 218 residues: Large ribosomal subunit protein uL4 (218 aa).

A disordered region spans residues 54-106 (GTHAVKNRGAVSGGGRKPWKQKGTGRARQGSIRAPQWYHGGVAHGPVPRDYSQ).

The protein belongs to the universal ribosomal protein uL4 family. As to quaternary structure, part of the 50S ribosomal subunit.

In terms of biological role, one of the primary rRNA binding proteins, this protein initially binds near the 5'-end of the 23S rRNA. It is important during the early stages of 50S assembly. It makes multiple contacts with different domains of the 23S rRNA in the assembled 50S subunit and ribosome. Its function is as follows. Forms part of the polypeptide exit tunnel. This is Large ribosomal subunit protein uL4 from Bifidobacterium animalis subsp. lactis (strain AD011).